Here is a 278-residue protein sequence, read N- to C-terminus: MNNILSEEVLNVTDFTTSRQLTLWKREDLQSPQLDDVAEEVPVALVYNGISHVVMMASPKDLTHFAMGFSLSEGIIDSPREIYGMDVVPSCNGLEVQIDLSSRRFMGLKARRRALAGRTGCGVCGVEQLNDIGKPVQPLPFSQTFNLGNLDRALKHLNDFQPTGKLTGCTHAAAWVMPSGELAGGHEDVGRHVALDKLLGRRATEGEEWRQGAALVSSRASYEMVQKSAMCGVEILFAVSAATTLAVEVAERCNLTLVGFCKPGRATIYTHPQRLIAD.

Residue C121 is the Cysteine persulfide intermediate of the active site. 260 to 265 is a Mo-bis(molybdopterin guanine dinucleotide) binding site; the sequence is FCKPGR.

The protein belongs to the FdhD family.

The protein resides in the cytoplasm. Required for formate dehydrogenase (FDH) activity. Acts as a sulfur carrier protein that transfers sulfur from IscS to the molybdenum cofactor prior to its insertion into FDH. The protein is Sulfur carrier protein FdhD of Salmonella newport (strain SL254).